A 359-amino-acid chain; its full sequence is 3-dehydroquinate synthase (359 aa).

Residues 71–76 (DGEQYK), 105–109 (GVIGD), 129–130 (TT), K142, K151, and 169–172 (CLAT) contribute to the NAD(+) site. E184, H247, and H264 together coordinate Zn(2+).

It belongs to the sugar phosphate cyclases superfamily. Dehydroquinate synthase family. It depends on Co(2+) as a cofactor. The cofactor is Zn(2+). NAD(+) is required as a cofactor.

It is found in the cytoplasm. The enzyme catalyses 7-phospho-2-dehydro-3-deoxy-D-arabino-heptonate = 3-dehydroquinate + phosphate. Its pathway is metabolic intermediate biosynthesis; chorismate biosynthesis; chorismate from D-erythrose 4-phosphate and phosphoenolpyruvate: step 2/7. In terms of biological role, catalyzes the conversion of 3-deoxy-D-arabino-heptulosonate 7-phosphate (DAHP) to dehydroquinate (DHQ). The sequence is that of 3-dehydroquinate synthase from Baumannia cicadellinicola subsp. Homalodisca coagulata.